Consider the following 433-residue polypeptide: Ribosome biogenesis protein WDR12 homolog (433 aa).

Met-1 is modified (N-acetylmethionine). Positions 12 to 96 (LHVKFVTKLD…ERTLEIEYIR (85 aa)) are ubiquitin-like (UBL) domain. 7 WD repeats span residues 108 to 146 (LHDDWVSAVNGSSPRFILTGCYDGLGRVWSSAGSCSHIL), 148 to 191 (GHSG…SVDS), 203 to 242 (GHKASVQSVSAQKSGNMVCSSSWDCTINLWNTNESTSEGE), 270 to 308 (GHTQCVSSVVWPEHDVIYSSSWDHSVRRWDVETGKDSLN), 310 to 350 (FCGK…TSAP), 356 to 396 (SHSS…PLSV), and 399 to 433 (THNDKVLSADWWKGESVVSGGADSNLRISSGIAIS). The segment at 238–263 (TSEGESVSVKKRKGNNQAEESQSEGE) is disordered.

Belongs to the WD repeat WDR12/YTM1 family. Interacts with PES. Interacts with BOP1.

Its subcellular location is the nucleus. It localises to the nucleolus. The protein localises to the nucleoplasm. Its function is as follows. Required for maturation of ribosomal RNAs and formation of the large ribosomal subunit. The sequence is that of Ribosome biogenesis protein WDR12 homolog from Arabidopsis thaliana (Mouse-ear cress).